Reading from the N-terminus, the 547-residue chain is Pyochelin synthase PchD (547 aa).

The protein belongs to the ATP-dependent AMP-binding enzyme family.

It catalyses the reaction salicylate + holo-[ACP] + ATP = salicyl-[ACP] + AMP + diphosphate. It participates in siderophore biosynthesis. It functions in the pathway antifungal biosynthesis. Involved in the biosynthesis of the siderophore pyochelin. Specifically adenylates salicylate and loads it onto the holo form of PchE via a thioester linkage to the phosphopanthetheine moiety. Is also involved in the synthesis of the antifungal antibiotic dihydroaeruginoic acid (Dha or hydroxyphenyl-thiazolinyl-carboxylate), a precursor of pyochelin. The protein is Pyochelin synthase PchD of Pseudomonas aeruginosa (strain ATCC 15692 / DSM 22644 / CIP 104116 / JCM 14847 / LMG 12228 / 1C / PRS 101 / PAO1).